The following is a 217-amino-acid chain: Protein-L-isoaspartate O-methyltransferase (217 aa).

Residue Ser-65 is part of the active site.

It belongs to the methyltransferase superfamily. L-isoaspartyl/D-aspartyl protein methyltransferase family.

The protein localises to the cytoplasm. The enzyme catalyses [protein]-L-isoaspartate + S-adenosyl-L-methionine = [protein]-L-isoaspartate alpha-methyl ester + S-adenosyl-L-homocysteine. Catalyzes the methyl esterification of L-isoaspartyl residues in peptides and proteins that result from spontaneous decomposition of normal L-aspartyl and L-asparaginyl residues. It plays a role in the repair and/or degradation of damaged proteins. This chain is Protein-L-isoaspartate O-methyltransferase, found in Chlorobium limicola (strain DSM 245 / NBRC 103803 / 6330).